The chain runs to 137 residues: Large ribosomal subunit protein bL17 (137 aa).

The protein belongs to the bacterial ribosomal protein bL17 family. In terms of assembly, part of the 50S ribosomal subunit. Contacts protein L32.

This Caulobacter sp. (strain K31) protein is Large ribosomal subunit protein bL17.